A 122-amino-acid chain; its full sequence is Large ribosomal subunit protein uL14 (122 aa).

Belongs to the universal ribosomal protein uL14 family. In terms of assembly, part of the 50S ribosomal subunit. Forms a cluster with proteins L3 and L19. In the 70S ribosome, L14 and L19 interact and together make contacts with the 16S rRNA in bridges B5 and B8.

Binds to 23S rRNA. Forms part of two intersubunit bridges in the 70S ribosome. The polypeptide is Large ribosomal subunit protein uL14 (Aliarcobacter butzleri (strain RM4018) (Arcobacter butzleri)).